We begin with the raw amino-acid sequence, 234 residues long: MFLASLLRRIAFSYYDYKAYNFNIEKTDFVVIHIPDQIGDAMAIFPVIRALELHKIKHLLIVTSTINLEVFNALKLEQTKLTLVTMTMQDHATLKEIKDLAKNITQQYGTPDLCIEGMRKKNLKTMLFISQLKAKTNFQVVGITMNCFSPLCKNASSMDQKLRAPVPMTWAFMMREAGFPAVRPIYELPLSEDVLDEVREEMRSLGSYIAFNLEGSSQERTFSLSIAENLIAKI.

This is an uncharacterized protein from Escherichia coli (strain K12).